Reading from the N-terminus, the 107-residue chain is MKLSVVLALFIIFQLGAASLMRNWMFDFEKELEHDYDDSEIGFHNIHSLMARSRRGDKVKICGTKVLKMVMVMCGGECSSTNENIATECCEKMCTMEDITTKCCPSR.

An N-terminal signal peptide occupies residues 1–19; it reads MKLSVVLALFIIFQLGAAS. Residues 20–55 constitute a propeptide that is removed on maturation; it reads LMRNWMFDFEKELEHDYDDSEIGFHNIHSLMARSRR. Disulfide bonds link C62-C90, C74-C103, C78-C104, and C89-C94.

Belongs to the insulin family.

Its subcellular location is the secreted. The polypeptide is Probable insulin-like peptide beta-type 3 (ins-3) (Caenorhabditis elegans).